The sequence spans 373 residues: Ribosomal RNA small subunit methyltransferase H (373 aa).

Residues 92-94 (GGH), aspartate 111, tyrosine 138, aspartate 159, and glutamine 166 contribute to the S-adenosyl-L-methionine site. 2 stretches are compositionally biased toward basic and acidic residues: residues 343 to 355 (AERADEQEIERNP) and 363 to 373 (RALEKVGGRGS). A disordered region spans residues 343–373 (AERADEQEIERNPRSAPVRLRALEKVGGRGS).

It belongs to the methyltransferase superfamily. RsmH family.

It is found in the cytoplasm. It carries out the reaction cytidine(1402) in 16S rRNA + S-adenosyl-L-methionine = N(4)-methylcytidine(1402) in 16S rRNA + S-adenosyl-L-homocysteine + H(+). Its function is as follows. Specifically methylates the N4 position of cytidine in position 1402 (C1402) of 16S rRNA. The sequence is that of Ribosomal RNA small subunit methyltransferase H from Mycolicibacterium smegmatis (strain ATCC 700084 / mc(2)155) (Mycobacterium smegmatis).